The primary structure comprises 363 residues: Pyruvate dehydrogenase E1 component subunit beta-1, mitochondrial (363 aa).

A mitochondrion-targeting transit peptide spans 1–29 (MLGILRQRAIDGASTLRRTRFALVSARSY). A thiamine diphosphate-binding site is contributed by E92. K(+) is bound by residues I145, A193, I194, and D196. Residues K247 and K254 each participate in a glycyl lysine isopeptide (Lys-Gly) (interchain with G-Cter in ubiquitin) cross-link.

As to quaternary structure, tetramer of 2 alpha and 2 beta subunits. Thiamine diphosphate serves as cofactor. In terms of tissue distribution, expressed in roots, immature rosettes, and mature rosettes.

It localises to the mitochondrion matrix. It catalyses the reaction N(6)-[(R)-lipoyl]-L-lysyl-[protein] + pyruvate + H(+) = N(6)-[(R)-S(8)-acetyldihydrolipoyl]-L-lysyl-[protein] + CO2. In terms of biological role, the pyruvate dehydrogenase complex catalyzes the overall conversion of pyruvate to acetyl-CoA and CO(2). It contains multiple copies of three enzymatic components: pyruvate dehydrogenase (E1), dihydrolipoamide acetyltransferase (E2) and lipoamide dehydrogenase (E3). The polypeptide is Pyruvate dehydrogenase E1 component subunit beta-1, mitochondrial (PDH2) (Arabidopsis thaliana (Mouse-ear cress)).